The following is a 401-amino-acid chain: Adenosine 3'-phospho 5'-phosphosulfate transporter 2 (401 aa).

Residues asparagine 12 and asparagine 71 are each glycosylated (N-linked (GlcNAc...) asparagine). 6 helical membrane-spanning segments follow: residues leucine 78 to leucine 98, tyrosine 111 to leucine 131, methionine 147 to leucine 167, proline 170 to isoleucine 190, valine 200 to isoleucine 220, and asparagine 223 to glycine 243. Asparagine 254 is a glycosylation site (N-linked (GlcNAc...) asparagine). 4 helical membrane-spanning segments follow: residues isoleucine 267–threonine 287, glycine 298–leucine 317, leucine 324–alanine 346, and phenylalanine 349–tyrosine 369.

This sequence belongs to the nucleotide-sugar transporter family. SLC35B subfamily.

Its subcellular location is the golgi apparatus membrane. It catalyses the reaction 3'-phosphoadenylyl sulfate(in) + adenosine 3',5'-bisphosphate(out) = 3'-phosphoadenylyl sulfate(out) + adenosine 3',5'-bisphosphate(in). Its function is as follows. Probably functions as a 3'-phosphoadenylyl sulfate:adenosine 3',5'-bisphosphate antiporter at the Golgi membranes. Mediates the transport from the cytosol into the lumen of the Golgi of 3'-phosphoadenylyl sulfate/adenosine 3'-phospho 5'-phosphosulfate (PAPS), a universal sulfuryl donor for sulfation events that take place in that compartment. This Pongo abelii (Sumatran orangutan) protein is Adenosine 3'-phospho 5'-phosphosulfate transporter 2.